A 155-amino-acid chain; its full sequence is Ribosome maturation factor RimP (155 aa).

The protein belongs to the RimP family.

It localises to the cytoplasm. In terms of biological role, required for maturation of 30S ribosomal subunits. The polypeptide is Ribosome maturation factor RimP (Staphylococcus aureus (strain JH9)).